A 768-amino-acid chain; its full sequence is Photosystem I P700 chlorophyll a apoprotein A1 (768 aa).

The next 8 membrane-spanning stretches (helical) occupy residues 76–99 (VFSA…FHGA), 162–185 (LMAL…YHYH), 201–225 (LNHH…HIGA), 310–328 (ISHH…GHLY), 369–392 (WHAQ…HHMY), 408–434 (LGLF…IAMI), 456–478 (ALIS…LYIH), and 559–577 (FMIH…LILL). Residues Cys601 and Cys610 each contribute to the [4Fe-4S] cluster site. Helical transmembrane passes span 617 to 638 (HVFL…HFSW) and 682 to 704 (ISMY…MFLF). His693 provides a ligand contact to divinylchlorophyll a'. 2 residues coordinate divinyl chlorophyll a: Met701 and Tyr709. Phylloquinone is bound at residue Trp710. A helical membrane pass occupies residues 742–762 (AVGAAHFLLGGIATTWAFFHA).

It belongs to the PsaA/PsaB family. As to quaternary structure, the PsaA/B heterodimer binds the P700 divinyl chlorophyll special pair and subsequent electron acceptors. PSI consists of a core antenna complex that captures photons, and an electron transfer chain that converts photonic excitation into a charge separation. The cyanobacterial PSI reaction center is composed of one copy each of PsaA,B,C,D,E,F,I,J,K,L,M and X, and forms trimeric complexes. The cofactor is PSI electron transfer chain: 5 divinyl chlorophyll a, 1 divinyl chlorophyll a', 2 phylloquinones and 3 4Fe-4S clusters. PSI core antenna: 90 divinyl chlorophyll a, 22 carotenoids, 3 phospholipids and 1 galactolipid. P700 is a divinyl chlorophyll a/divinyl chlorophyll a' dimer, A0 is one or more divinyl chlorophyll a, A1 is one or both phylloquinones and FX is a shared 4Fe-4S iron-sulfur center..

Its subcellular location is the cellular thylakoid membrane. It catalyses the reaction reduced [plastocyanin] + hnu + oxidized [2Fe-2S]-[ferredoxin] = oxidized [plastocyanin] + reduced [2Fe-2S]-[ferredoxin]. In terms of biological role, psaA and PsaB bind P700, the primary electron donor of photosystem I (PSI), as well as the electron acceptors A0, A1 and FX. PSI is a plastocyanin/cytochrome c6-ferredoxin oxidoreductase, converting photonic excitation into a charge separation, which transfers an electron from the donor P700 chlorophyll pair to the spectroscopically characterized acceptors A0, A1, FX, FA and FB in turn. Oxidized P700 is reduced on the lumenal side of the thylakoid membrane by plastocyanin or cytochrome c6. In Prochlorococcus marinus (strain NATL1A), this protein is Photosystem I P700 chlorophyll a apoprotein A1.